The sequence spans 114 residues: Iron-sulfur cluster insertion protein ErpA (114 aa).

Iron-sulfur cluster-binding residues include Cys-42, Cys-106, and Cys-108.

This sequence belongs to the HesB/IscA family. As to quaternary structure, homodimer. Iron-sulfur cluster is required as a cofactor.

In terms of biological role, required for insertion of 4Fe-4S clusters for at least IspG. The polypeptide is Iron-sulfur cluster insertion protein ErpA (Haemophilus ducreyi (strain 35000HP / ATCC 700724)).